The chain runs to 63 residues: Large ribosomal subunit protein bL28 (63 aa).

This sequence belongs to the bacterial ribosomal protein bL28 family.

This is Large ribosomal subunit protein bL28 from Alkaliphilus metalliredigens (strain QYMF).